The following is a 279-amino-acid chain: Putative pyruvate, phosphate dikinase regulatory protein (279 aa).

153-160 is an ADP binding site; it reads GVSRTSKT.

Belongs to the pyruvate, phosphate/water dikinase regulatory protein family. PDRP subfamily.

It catalyses the reaction N(tele)-phospho-L-histidyl/L-threonyl-[pyruvate, phosphate dikinase] + ADP = N(tele)-phospho-L-histidyl/O-phospho-L-threonyl-[pyruvate, phosphate dikinase] + AMP + H(+). It carries out the reaction N(tele)-phospho-L-histidyl/O-phospho-L-threonyl-[pyruvate, phosphate dikinase] + phosphate + H(+) = N(tele)-phospho-L-histidyl/L-threonyl-[pyruvate, phosphate dikinase] + diphosphate. Functionally, bifunctional serine/threonine kinase and phosphorylase involved in the regulation of the pyruvate, phosphate dikinase (PPDK) by catalyzing its phosphorylation/dephosphorylation. In Rhodopseudomonas palustris (strain BisB5), this protein is Putative pyruvate, phosphate dikinase regulatory protein.